A 156-amino-acid polypeptide reads, in one-letter code: Cell division protein SepF (156 aa).

Residues 15–58 (SDVVPEDEDDEVIDEEPESSFDTDRSVTPIPAASTQPSTSQRKS) are disordered. Positions 18–35 (VPEDEDDEVIDEEPESSF) are enriched in acidic residues. The segment covering 47-57 (ASTQPSTSQRK) has biased composition (polar residues).

Belongs to the SepF family. Homodimer. Interacts with FtsZ.

It localises to the cytoplasm. Functionally, cell division protein that is part of the divisome complex and is recruited early to the Z-ring. Probably stimulates Z-ring formation, perhaps through the cross-linking of FtsZ protofilaments. Its function overlaps with FtsA. This is Cell division protein SepF from Bifidobacterium animalis subsp. lactis (strain AD011).